Reading from the N-terminus, the 406-residue chain is Argininosuccinate synthase (406 aa).

8–16 (AYSGGLDTS) contacts ATP. Position 86 (tyrosine 86) interacts with L-citrulline. Glycine 116 is a binding site for ATP. Residues threonine 118, asparagine 122, and aspartate 123 each coordinate L-aspartate. Position 122 (asparagine 122) interacts with L-citrulline. Arginine 126, serine 174, serine 183, glutamate 259, and tyrosine 271 together coordinate L-citrulline.

This sequence belongs to the argininosuccinate synthase family. Type 1 subfamily. Homotetramer.

It localises to the cytoplasm. The catalysed reaction is L-citrulline + L-aspartate + ATP = 2-(N(omega)-L-arginino)succinate + AMP + diphosphate + H(+). It functions in the pathway amino-acid biosynthesis; L-arginine biosynthesis; L-arginine from L-ornithine and carbamoyl phosphate: step 2/3. The polypeptide is Argininosuccinate synthase (Dehalococcoides mccartyi (strain ATCC BAA-2266 / KCTC 15142 / 195) (Dehalococcoides ethenogenes (strain 195))).